We begin with the raw amino-acid sequence, 410 residues long: Multifunctional CCA protein (410 aa).

ATP is bound by residues Gly8 and Arg11. 2 residues coordinate CTP: Gly8 and Arg11. Residues Glu21 and Asp23 each contribute to the Mg(2+) site. The ATP site is built by Arg91, Arg137, and Arg140. Residues Arg91, Arg137, and Arg140 each contribute to the CTP site. One can recognise an HD domain in the interval 228–329; sequence TLLHQFLCLK…WKLFKSLDIL (102 aa).

This sequence belongs to the tRNA nucleotidyltransferase/poly(A) polymerase family. Bacterial CCA-adding enzyme type 1 subfamily. As to quaternary structure, monomer. Can also form homodimers and oligomers. Mg(2+) is required as a cofactor. Requires Ni(2+) as cofactor.

It catalyses the reaction a tRNA precursor + 2 CTP + ATP = a tRNA with a 3' CCA end + 3 diphosphate. The catalysed reaction is a tRNA with a 3' CCA end + 2 CTP + ATP = a tRNA with a 3' CCACCA end + 3 diphosphate. Functionally, catalyzes the addition and repair of the essential 3'-terminal CCA sequence in tRNAs without using a nucleic acid template. Adds these three nucleotides in the order of C, C, and A to the tRNA nucleotide-73, using CTP and ATP as substrates and producing inorganic pyrophosphate. tRNA 3'-terminal CCA addition is required both for tRNA processing and repair. Also involved in tRNA surveillance by mediating tandem CCA addition to generate a CCACCA at the 3' terminus of unstable tRNAs. While stable tRNAs receive only 3'-terminal CCA, unstable tRNAs are marked with CCACCA and rapidly degraded. This Alcanivorax borkumensis (strain ATCC 700651 / DSM 11573 / NCIMB 13689 / SK2) protein is Multifunctional CCA protein.